The sequence spans 685 residues: Kinesin-related protein 11 (685 aa).

Residues 4-405 enclose the Kinesin motor domain; it reads NISVSVRARP…LKFASRAKKI (402 aa). The tract at residues 36–105 is disordered; it reads TSLPPPITQP…TTVPASPAPT (70 aa). Residues 47–105 show a composition bias toward low complexity; that stretch reads SSLPPISTPIKSSSSSSTSTSAGSLKTPLKTPLKTPLKTPLKTNSTTTNTTVPASPAPT. 156–163 provides a ligand contact to ATP; it reads GITSSGKT. Residues 411-488 are a coiled coil; it reads VNEILDDKAL…KINNLNKLIL (78 aa). The tract at residues 495–568 is disordered; it reads NSASKGGSGS…QSTSSLTIGG (74 aa). Residues 511–520 are compositionally biased toward polar residues; the sequence is RSTFVSPSQN. Residues 533-565 show a composition bias toward low complexity; it reads PNSFSNLLLQSPSQNNNNNSHISPLSQSTSSLT. Residues 574 to 683 adopt a coiled-coil conformation; it reads FESNELIQIQ…LKSKIQEYEV (110 aa).

The protein belongs to the TRAFAC class myosin-kinesin ATPase superfamily. Kinesin family.

It is found in the cytoplasm. The protein resides in the cytoskeleton. Microtubule-associated force-producing protein that plays a role in organelle transport. Its motor activity is directed toward the microtubule's plus end. This chain is Kinesin-related protein 11 (kif11), found in Dictyostelium discoideum (Social amoeba).